Consider the following 311-residue polypeptide: Homeobox protein knotted-1-like 10 (311 aa).

Disordered regions lie at residues 1 to 45 (MEDL…PATT) and 153 to 184 (LCGGAPPPTDNSDEMVGSSEDEPCSGDADAAD). The span at 12 to 22 (SRGGGGGGGGA) shows a compositional bias: gly residues. Residues 197-217 (ELKEMLLKKYSGCLSRLRSEF) form the ELK domain. Residues 218-281 (LKKRKKGKLP…NQRKRHWKPS (64 aa)) constitute a DNA-binding region (homeobox; TALE-type).

This sequence belongs to the TALE/KNOX homeobox family.

It is found in the nucleus. Functionally, probable transcription factor that may be involved in shoot formation during embryogenesis. The protein is Homeobox protein knotted-1-like 10 (OSH71) of Oryza sativa subsp. indica (Rice).